The following is a 449-amino-acid chain: Uridine-cytidine kinase C (449 aa).

Position 58–65 (58–65) interacts with ATP; the sequence is GPSGAGKT. The region spanning 235 to 401 is the CYTH domain; it reads NPIYILKSVK…QKSYIELYQD (167 aa).

The protein belongs to the uridine kinase family.

It catalyses the reaction uridine + ATP = UMP + ADP + H(+). The catalysed reaction is cytidine + ATP = CMP + ADP + H(+). It participates in pyrimidine metabolism; CTP biosynthesis via salvage pathway; CTP from cytidine: step 1/3. Its pathway is pyrimidine metabolism; UMP biosynthesis via salvage pathway; UMP from uridine: step 1/1. Catalyzes the conversion of uridine into uridine monophosphate and cytidine into cytidine monophosphate in the pyrimidine salvage pathway. This is Uridine-cytidine kinase C (udkC) from Dictyostelium discoideum (Social amoeba).